The following is a 455-amino-acid chain: Probable circularly permuted 1,3-beta-glucanase TOS1 (455 aa).

The first 23 residues, 1-23, serve as a signal peptide directing secretion; the sequence is MLQKLSMTALVGLFSSVVSLVNA. The segment at 158 to 221 is disordered; sequence TADSTNTVVG…SSSSSSNTNG (64 aa). Residues 172–189 show a composition bias toward polar residues; sequence SSYTKDSTVLSSSAQAVE. The segment covering 190 to 219 has biased composition (low complexity); it reads TSESQSSISSSKTTSSAAAASSSSSSSSNT. Asn-236 carries N-linked (GlcNAc...) asparagine glycosylation. An ExDxxE motif motif is present at residues 372 to 377; the sequence is EMDLFE. The N-linked (GlcNAc...) asparagine glycan is linked to Asn-417.

Belongs to the PGA52 family.

Its subcellular location is the secreted. The protein resides in the cell wall. It catalyses the reaction Hydrolysis of (1-&gt;3)-beta-D-glucosidic linkages in (1-&gt;3)-beta-D-glucans.. Functionally, probable circularly permuted 1,3-beta-glucanase involved in cell wall modification through beta-1,3-glucan network alterations such as increased branching or remodeling. The protein is Probable circularly permuted 1,3-beta-glucanase TOS1 of Saccharomyces cerevisiae (strain ATCC 204508 / S288c) (Baker's yeast).